Reading from the N-terminus, the 735-residue chain is Phosphoribosylformylglycinamidine synthase subunit PurL (735 aa).

His-49 is a catalytic residue. Residues Tyr-52 and Lys-91 each contribute to the ATP site. Glu-93 contacts Mg(2+). Residues 94-97 and Arg-116 each bind substrate; that span reads SHNH. His-95 serves as the catalytic Proton acceptor. Asp-117 contacts Mg(2+). Gln-240 lines the substrate pocket. Asp-268 contacts Mg(2+). 312–314 is a binding site for substrate; the sequence is ESQ. ATP contacts are provided by Asp-493 and Gly-530. Position 531 (Asn-531) interacts with Mg(2+). Position 533 (Ser-533) interacts with substrate.

This sequence belongs to the FGAMS family. As to quaternary structure, monomer. Part of the FGAM synthase complex composed of 1 PurL, 1 PurQ and 2 PurS subunits.

The protein resides in the cytoplasm. It catalyses the reaction N(2)-formyl-N(1)-(5-phospho-beta-D-ribosyl)glycinamide + L-glutamine + ATP + H2O = 2-formamido-N(1)-(5-O-phospho-beta-D-ribosyl)acetamidine + L-glutamate + ADP + phosphate + H(+). Its pathway is purine metabolism; IMP biosynthesis via de novo pathway; 5-amino-1-(5-phospho-D-ribosyl)imidazole from N(2)-formyl-N(1)-(5-phospho-D-ribosyl)glycinamide: step 1/2. In terms of biological role, part of the phosphoribosylformylglycinamidine synthase complex involved in the purines biosynthetic pathway. Catalyzes the ATP-dependent conversion of formylglycinamide ribonucleotide (FGAR) and glutamine to yield formylglycinamidine ribonucleotide (FGAM) and glutamate. The FGAM synthase complex is composed of three subunits. PurQ produces an ammonia molecule by converting glutamine to glutamate. PurL transfers the ammonia molecule to FGAR to form FGAM in an ATP-dependent manner. PurS interacts with PurQ and PurL and is thought to assist in the transfer of the ammonia molecule from PurQ to PurL. The sequence is that of Phosphoribosylformylglycinamidine synthase subunit PurL from Azorhizobium caulinodans (strain ATCC 43989 / DSM 5975 / JCM 20966 / LMG 6465 / NBRC 14845 / NCIMB 13405 / ORS 571).